Reading from the N-terminus, the 319-residue chain is tRNA uridine(34) hydroxylase (319 aa).

Residues 127-221 enclose the Rhodanese domain; that stretch reads KQEDTVIIDA…YGKDPEVQGE (95 aa). C181 serves as the catalytic Cysteine persulfide intermediate.

Belongs to the TrhO family.

It carries out the reaction uridine(34) in tRNA + AH2 + O2 = 5-hydroxyuridine(34) in tRNA + A + H2O. Catalyzes oxygen-dependent 5-hydroxyuridine (ho5U) modification at position 34 in tRNAs. The protein is tRNA uridine(34) hydroxylase of Bacillus thuringiensis (strain Al Hakam).